The following is a 181-amino-acid chain: Cell division protein SepF (181 aa).

Acidic residues predominate over residues 18-27 (EDYLDDDDYD). The segment at 18–42 (EDYLDDDDYDDGRAVGHDDRRAMHE) is disordered. The segment covering 28–42 (DGRAVGHDDRRAMHE) has biased composition (basic and acidic residues).

The protein belongs to the SepF family. Homodimer. Interacts with FtsZ.

It is found in the cytoplasm. In terms of biological role, cell division protein that is part of the divisome complex and is recruited early to the Z-ring. Probably stimulates Z-ring formation, perhaps through the cross-linking of FtsZ protofilaments. Its function overlaps with FtsA. The chain is Cell division protein SepF from Frankia alni (strain DSM 45986 / CECT 9034 / ACN14a).